The following is a 670-amino-acid chain: Catalase (670 aa).

Active-site residues include histidine 61 and asparagine 132. Heme is bound at residue tyrosine 345.

This sequence belongs to the catalase family. As to quaternary structure, homotetramer. Requires heme as cofactor.

The protein resides in the peroxisome matrix. The catalysed reaction is 2 H2O2 = O2 + 2 H2O. Functionally, catalyzes the degradation of hydrogen peroxide (H(2)O(2)) generated by peroxisomal oxidases to water and oxygen, thereby protecting cells from the toxic effects of hydrogen peroxide. The chain is Catalase from Penicillium janthinellum (Penicillium vitale).